We begin with the raw amino-acid sequence, 144 residues long: Large ribosomal subunit protein uL15 (144 aa).

The interval 1-57 (MRLNTLSPAPGSKPSAKRVGRGIGSGLGKTCGRGHKGQKSRSGGSVRPGFEGGQMPL) is disordered. Residues 21–31 (RGIGSGLGKTC) show a composition bias toward gly residues.

Belongs to the universal ribosomal protein uL15 family. As to quaternary structure, part of the 50S ribosomal subunit.

Binds to the 23S rRNA. This chain is Large ribosomal subunit protein uL15, found in Photobacterium profundum (strain SS9).